The following is a 146-amino-acid chain: Hemoglobin subunit beta (146 aa).

Val1 is subject to N-acetylvaline. The region spanning 2 to 146 (HLTGEEKSAV…VANALAHKYH (145 aa)) is the Globin domain. At Thr12 the chain carries Phosphothreonine. The residue at position 44 (Ser44) is a Phosphoserine. Lys59 is modified (N6-acetyllysine). His63 provides a ligand contact to heme b. Lys82 bears the N6-acetyllysine mark. A heme b-binding site is contributed by His92. Cys93 is subject to S-nitrosocysteine. An N6-acetyllysine modification is found at Lys144.

It belongs to the globin family. In terms of assembly, heterotetramer of two alpha chains and two beta chains. Red blood cells.

Its function is as follows. Involved in oxygen transport from the lung to the various peripheral tissues. The sequence is that of Hemoglobin subunit beta (HBB) from Mico argentatus (Silvery marmoset).